The chain runs to 111 residues: Nucleoid-associated protein Clim_0875 (111 aa).

The protein belongs to the YbaB/EbfC family. In terms of assembly, homodimer.

It localises to the cytoplasm. The protein resides in the nucleoid. In terms of biological role, binds to DNA and alters its conformation. May be involved in regulation of gene expression, nucleoid organization and DNA protection. The chain is Nucleoid-associated protein Clim_0875 from Chlorobium limicola (strain DSM 245 / NBRC 103803 / 6330).